The following is an 885-amino-acid chain: Ankyrin repeat and SAM domain-containing protein 6 (885 aa).

ANK repeat units follow at residues 8-37, 68-97, 101-130, 134-163, 181-210, 215-244, 282-312, 316-345, 350-379, and 383-414; these read PGLQ…EPVA, AGNS…SVNS, YGWS…DVNA, LGAS…TVDH, LGIT…DPNH, VGWS…NPDH, KRRP…HVNL, DGAT…DMNK, HGWT…DVTL, and NGYT…QVNK. Position 129 is a 3-hydroxyasparagine (Asn129). Disordered regions lie at residues 415-439, 491-522, 563-775, and 855-885; these read DRGG…SIPM, MRAP…PRRE, SSDR…ITDE, and FESS…SSRR. A compositionally biased stretch (low complexity) spans 608–640; that stretch reads PSISRSPTSPASSGNFNHSPHSSGGASGVGSMS. A Phosphoserine modification is found at Ser650. Residues 650–662 are compositionally biased toward polar residues; sequence SGGSVDSVLSQIA. 2 stretches are compositionally biased toward low complexity: residues 689-713 and 722-739; these read GSSP…TSSS and PPSG…TLTP. A phosphoserine mark is found at Ser734 and Ser742. Low complexity predominate over residues 750-770; it reads SSVSSSSSHRQSKSSGGSSSG. The 64-residue stretch at 773-836 folds into the SAM domain; it reads TDEDELTGIL…LAAISELNAG (64 aa). The segment covering 855 to 865 has biased composition (polar residues); sequence FESSASNTRAP. Over residues 876–885 the composition is skewed to basic and acidic residues; sequence RPEETVSSRR.

In terms of assembly, homooligomer. Interacts with NEK8. Central component of a complex containing at least ANKS6, INVS, NEK8 and NPHP3. ANKS6 may organize complex assembly by linking INVS and NPHP3 to NEK8 and INVS may target the complex to the proximal ciliary axoneme. Interacts (via SAM domain) with BICC1 (via KH domains) in an RNA-dependent manner. Interacts (via SAM domain) with ANKS3 (via SAM domain). In terms of processing, hydroxylated at Asn-129, most probably by HIF1AN. This hydroxylation results in decreased NEK8-binding. Widely expressed with moderate level in brain, skeletal muscle and testis. Expressed in renal tubules.

Its subcellular location is the cell projection. The protein localises to the cilium. The protein resides in the cytoplasm. Functionally, required for renal function. The chain is Ankyrin repeat and SAM domain-containing protein 6 (Anks6) from Rattus norvegicus (Rat).